Consider the following 133-residue polypeptide: uncharacterized protein (133 aa).

Helical transmembrane passes span 5–27 (KLFF…FSLI), 42–64 (IAWN…YSLY), 77–99 (ALIS…TFSS), and 103–125 (LVWW…LLLK).

It is found in the cell membrane. This is an uncharacterized protein from Bacillus subtilis (strain 168).